The following is a 200-amino-acid chain: Histone H1 (200 aa).

Residues 1 to 14 (MPPKKAPTTAKKAA) show a composition bias toward low complexity. Disordered regions lie at residues 1 to 20 (MPPK…PTHT) and 78 to 200 (DFIQ…NKKA). The 76-residue stretch at 18 to 93 (THTSYRDMIK…GTSGPVKLAK (76 aa)) folds into the H15 domain. The span at 94–116 (KQAPAKPAPKKPATTTKTAAPKK) shows a compositional bias: low complexity. Basic and acidic residues predominate over residues 120–131 (KKADKAEKAEKP). The span at 159–185 (TAAPAVVDKPKVVSVTKSGRKTTTTAK) shows a compositional bias: low complexity.

The protein belongs to the histone H1/H5 family.

The protein resides in the nucleus. The protein localises to the chromosome. Functionally, could act as an H1-type linker histone. This chain is Histone H1 (hhoA), found in Emericella nidulans (strain FGSC A4 / ATCC 38163 / CBS 112.46 / NRRL 194 / M139) (Aspergillus nidulans).